We begin with the raw amino-acid sequence, 271 residues long: MMNSPIQAVIFDWAGTIVDFGSFAPTSIFVEAFKQGFDFEISLAEAREPMGLGKWQHIEAVGKLPTVAQRWQKQFGRPMQASDIDAIYAAFMPLQIAKVADHAAPIPHSLEVVEQIRSRGIKIGSCSGYPRQVMDVLIAAAADYGYRPDYVVATDDLAQGGRPAPFMALKNVIELGVTDVRACVKVDDALPGIEEGHNAGMWTVGLLLSGNEAGLTLEEYQHADDQTLQAARERAQAKLQQAKPHYLIDTVADLPAVLAQIEQRLLAGERP.

The active-site Nucleophile is the Asp12. 2 residues coordinate Mg(2+): Asp12 and Ala14. Lys54 serves as the catalytic Schiff-base intermediate with substrate. Asp188 lines the Mg(2+) pocket.

Belongs to the HAD-like hydrolase superfamily. PhnX family. In terms of assembly, homodimer. Mg(2+) is required as a cofactor.

It carries out the reaction phosphonoacetaldehyde + H2O = acetaldehyde + phosphate + H(+). Functionally, involved in phosphonate degradation. This is Phosphonoacetaldehyde hydrolase from Vibrio cholerae serotype O1 (strain ATCC 39541 / Classical Ogawa 395 / O395).